Here is a 598-residue protein sequence, read N- to C-terminus: Fumarate reductase flavoprotein subunit (598 aa).

Residues 12-16 (GAGGA), 36-38 (ISK), 44-52 (SHTVAAEGG), 156-158 (HFV), and D212 each bind FAD. H45 is subject to Tele-8alpha-FAD histidine. Residues H233 and R249 contribute to the active site. FAD-binding positions include 356–357 (HY), E380, and 391–397 (RLGSNSL). Residues 577 to 598 (AKRVYGGEATAQDKQNKEKANG) are disordered.

It belongs to the FAD-dependent oxidoreductase 2 family. FRD/SDH subfamily. Part of an enzyme complex containing four subunits: a flavoprotein (FrdA), an iron-sulfur protein (FrdB), and two hydrophobic anchor proteins (FrdC and FrdD). Requires FAD as cofactor.

Its subcellular location is the cell inner membrane. It catalyses the reaction a quinone + succinate = fumarate + a quinol. It carries out the reaction a menaquinone + succinate = a menaquinol + fumarate. Its function is as follows. Two distinct, membrane-bound, FAD-containing enzymes are responsible for the catalysis of fumarate and succinate interconversion; the fumarate reductase is used in anaerobic growth, and the succinate dehydrogenase is used in aerobic growth. This Proteus vulgaris protein is Fumarate reductase flavoprotein subunit (frdA).